Consider the following 539-residue polypeptide: GMP synthase [glutamine-hydrolyzing] (539 aa).

The Glutamine amidotransferase type-1 domain maps to 4–202 (KILILDFGSQ…VLQIAGCKPD (199 aa)). Cys81 (nucleophile) is an active-site residue. Catalysis depends on residues His176 and Glu178. Residues 203 to 395 (WVMRDHIEEA…LGLPPEMVYR (193 aa)) enclose the GMPS ATP-PPase domain. 230–236 (SGGVDSS) lines the ATP pocket.

In terms of assembly, homodimer.

The enzyme catalyses XMP + L-glutamine + ATP + H2O = GMP + L-glutamate + AMP + diphosphate + 2 H(+). It participates in purine metabolism; GMP biosynthesis; GMP from XMP (L-Gln route): step 1/1. In terms of biological role, catalyzes the synthesis of GMP from XMP. This is GMP synthase [glutamine-hydrolyzing] from Cupriavidus taiwanensis (strain DSM 17343 / BCRC 17206 / CCUG 44338 / CIP 107171 / LMG 19424 / R1) (Ralstonia taiwanensis (strain LMG 19424)).